We begin with the raw amino-acid sequence, 531 residues long: Protein SHORT-ROOT (531 aa).

Positions 14–39 (QQSDSIITNQSSLSRTSTTTTGSPQT) are enriched in low complexity. 2 disordered regions span residues 14–40 (QQSD…PQTA) and 65–103 (SSSS…PSST). Positions 81-93 (TYYSPFTTPTQYH) are enriched in polar residues. A compositionally biased stretch (low complexity) spans 94–103 (PATSSTPSST). The GRAS domain occupies 134 to 529 (FDFSANAKWA…QPVVWASAWR (396 aa)). The interval 141-206 (KWADSVLLEA…GSGERCYRTM (66 aa)) is leucine repeat I (LRI). A VHIID region spans residues 225-290 (VLKFQEVSPW…DDTPHLRLTT (66 aa)). A VHIID motif is present at residues 256–260 (IHIVD). The tract at residues 310-343 (EIGNRMEKFARLMGVPFKFNIIHHVGDLSEFDLN) is leucine repeat II (LRII). The segment at 353 to 449 (LAINCVGAMH…ERAAGRAIVD (97 aa)) is PFYRE. An SAW region spans residues 452–529 (ACEPSDSTER…QPVVWASAWR (78 aa)).

It belongs to the GRAS family. In terms of assembly, interacts with SCR, SCL23, JKD and MGP. Interacts with SIEL. Association to endosomes and intercellular movement of SHR rely on the interaction with SIEL. Expressed in the stele and the quiescent center. Not detected in the ground tissue cell lineage. The SHR protein moves from the stele to a single layer of adjacent cells, where it enters the nucleus.

It localises to the cytoplasm. The protein resides in the nucleus. It is found in the early endosome. The protein localises to the late endosome. Its subcellular location is the recycling endosome. In terms of biological role, transcription factor required for quiescent center cells specification and maintenance of surrounding stem cells, and for the asymmetric cell division involved in radial pattern formation in roots. Essential for both cell division and cell specification. Regulates the radial organization of the shoot axial organs and is required for normal shoot gravitropism. Directly controls the transcription of SCR, and when associated with SCR, of MGP, RLK, TRI, NUC and SCL3. The protein is Protein SHORT-ROOT of Arabidopsis thaliana (Mouse-ear cress).